Reading from the N-terminus, the 200-residue chain is Large ribosomal subunit protein bL25 (200 aa).

Disordered stretches follow at residues 1–20 and 179–200; these read MTIE…ASRR and PVVA…GEAA.

This sequence belongs to the bacterial ribosomal protein bL25 family. CTC subfamily. As to quaternary structure, part of the 50S ribosomal subunit; part of the 5S rRNA/L5/L18/L25 subcomplex. Contacts the 5S rRNA. Binds to the 5S rRNA independently of L5 and L18.

In terms of biological role, this is one of the proteins that binds to the 5S RNA in the ribosome where it forms part of the central protuberance. This chain is Large ribosomal subunit protein bL25, found in Azoarcus sp. (strain BH72).